The sequence spans 130 residues: Small ribosomal subunit protein uS9 (130 aa).

It belongs to the universal ribosomal protein uS9 family.

This Alkalilimnicola ehrlichii (strain ATCC BAA-1101 / DSM 17681 / MLHE-1) protein is Small ribosomal subunit protein uS9.